Consider the following 184-residue polypeptide: UPF0316 protein YebE (184 aa).

3 helical membrane-spanning segments follow: residues 9–29 (GIAMVLIILIINIVYVSFFTI), 41–61 (LAAGISTIEILVYVTGLSLVL), and 67–87 (IQNVIAYALGYGLGVIVGMKI).

Belongs to the UPF0316 family.

The protein localises to the cell membrane. In Bacillus subtilis (strain 168), this protein is UPF0316 protein YebE (yebE).